The chain runs to 274 residues: Putative outer membrane protein CPn_1073/CP_0776/CPj1073/CpB1118 (274 aa).

The signal sequence occupies residues Met-1–Ala-21.

The protein resides in the cell outer membrane. The protein is Putative outer membrane protein CPn_1073/CP_0776/CPj1073/CpB1118 of Chlamydia pneumoniae (Chlamydophila pneumoniae).